The following is a 494-amino-acid chain: Tripartite motif-containing protein 5 (494 aa).

The residue at position 2 (Ala-2) is an N-acetylalanine. Residues 15 to 59 form an RING-type zinc finger; it reads CPICLELLTQPLSLDCGHSFCQACLTANHKTSMPDEGERSCPVCR. A Phosphoserine modification is found at Ser-86. The segment at 91 to 133 adopts a B box-type zinc-finger fold; sequence QKVDHCARHGEKLLLFCREDRKVICWLCERSQEHRGHHTFLTE. Zn(2+) is bound by residues Cys-96, His-99, Cys-118, and His-124. Positions 132-241 form a coiled coil; sequence TEEVAQEYQV…LISDLEHRLQ (110 aa). The tract at residues 186 to 199 is required for interaction with GABARAP and for autophagy; the sequence is FEQLRHILDWVESN. One can recognise a B30.2/SPRY domain in the interval 282–494; sequence LKVMLKKLRE…VPMTLCSPSS (213 aa).

The protein belongs to the TRIM/RBCC family. As to quaternary structure, can form homodimers and homotrimers. In addition to lower-order dimerization, also exhibits a higher-order multimerization and both low- and high-order multimerizations are essential for its restriction activity. Interacts with BTBD1 and BTBD2. Interacts with PSMC4, PSMC5, PSMD7 and HSPA8/HSC70. Interacts (via B30.2/SPRY domain) with HSPA1A/B. Interacts with PSMC2, MAP3K7/TAK1, TAB2 and TAB3. Interacts with SQSTM1. Interacts with TRIM6 and TRIM34. Interacts with ULK1 (phosphorylated form), GABARAP, GABARAPL1, GABARAPL2, MAP1LC3A, MAP1LC3C and BECN1. Post-translationally, degraded in a proteasome-independent fashion in the absence of viral infection but in a proteasome-dependent fashion following exposure to restriction sensitive virus. Autoubiquitinated in a RING finger- and UBE2D2-dependent manner. Monoubiquitinated by TRIM21. Deubiquitinated by Yersinia YopJ. Ubiquitination may not lead to proteasomal degradation.

Its subcellular location is the cytoplasm. It is found in the nucleus. It carries out the reaction S-ubiquitinyl-[E2 ubiquitin-conjugating enzyme]-L-cysteine + [acceptor protein]-L-lysine = [E2 ubiquitin-conjugating enzyme]-L-cysteine + N(6)-ubiquitinyl-[acceptor protein]-L-lysine.. Its pathway is protein modification; protein ubiquitination. Functionally, capsid-specific restriction factor that prevents infection from non-host-adapted retroviruses. Blocks viral replication early in the life cycle, after viral entry but before reverse transcription. In addition to acting as a capsid-specific restriction factor, also acts as a pattern recognition receptor that activates innate immune signaling in response to the retroviral capsid lattice. Binding to the viral capsid triggers its E3 ubiquitin ligase activity, and in concert with the heterodimeric ubiquitin conjugating enzyme complex UBE2V1-UBE2N (also known as UBC13-UEV1A complex) generates 'Lys-63'-linked polyubiquitin chains, which in turn are catalysts in the autophosphorylation of the MAP3K7/TAK1 complex (includes TAK1, TAB2, and TAB3). Activation of the MAP3K7/TAK1 complex by autophosphorylation results in the induction and expression of NF-kappa-B and MAPK-responsive inflammatory genes, thereby leading to an innate immune response in the infected cell. Plays a role in regulating autophagy through activation of autophagy regulator BECN1 by causing its dissociation from its inhibitors BCL2 and TAB2. The protein is Tripartite motif-containing protein 5 (TRIM5) of Nomascus leucogenys (Northern white-cheeked gibbon).